The sequence spans 335 residues: Ketol-acid reductoisomerase (NADP(+)) 2 (335 aa).

The KARI N-terminal Rossmann domain occupies 1 to 180; sequence MKTYYEQDAN…GCTRAGVIET (180 aa). NADP(+) contacts are provided by residues 24 to 27, Arg-47, Ser-51, and 81 to 84; these read YGSQ and DEQQ. His-106 is an active-site residue. Residue Gly-132 coordinates NADP(+). Positions 181–326 constitute a KARI C-terminal knotted domain; sequence TFQEETETDL…EELREMMSWI (146 aa). Mg(2+)-binding residues include Asp-189, Glu-193, Glu-225, and Glu-229. Ser-250 provides a ligand contact to substrate.

It belongs to the ketol-acid reductoisomerase family. The cofactor is Mg(2+).

It carries out the reaction (2R)-2,3-dihydroxy-3-methylbutanoate + NADP(+) = (2S)-2-acetolactate + NADPH + H(+). The enzyme catalyses (2R,3R)-2,3-dihydroxy-3-methylpentanoate + NADP(+) = (S)-2-ethyl-2-hydroxy-3-oxobutanoate + NADPH + H(+). It functions in the pathway amino-acid biosynthesis; L-isoleucine biosynthesis; L-isoleucine from 2-oxobutanoate: step 2/4. The protein operates within amino-acid biosynthesis; L-valine biosynthesis; L-valine from pyruvate: step 2/4. Functionally, involved in the biosynthesis of branched-chain amino acids (BCAA). Catalyzes an alkyl-migration followed by a ketol-acid reduction of (S)-2-acetolactate (S2AL) to yield (R)-2,3-dihydroxy-isovalerate. In the isomerase reaction, S2AL is rearranged via a Mg-dependent methyl migration to produce 3-hydroxy-3-methyl-2-ketobutyrate (HMKB). In the reductase reaction, this 2-ketoacid undergoes a metal-dependent reduction by NADPH to yield (R)-2,3-dihydroxy-isovalerate. This chain is Ketol-acid reductoisomerase (NADP(+)) 2, found in Bacillus thuringiensis subsp. konkukian (strain 97-27).